The primary structure comprises 1179 residues: Integrin alpha-1 (1179 aa).

The signal sequence occupies residues 1–28; the sequence is MAPRPRARPGVAVACCWLLTVVLRCCVS. At 29–1141 the chain is on the extracellular side; the sequence is FNVDVKNSMT…SKDGLPGRVP (1113 aa). An FG-GAP 1 repeat occupies 30–91; the sequence is NVDVKNSMTF…CPVGRGESLP (62 aa). N-linked (GlcNAc...) asparagine glycosylation is present at Asn74. Cys82 and Cys92 form a disulfide bridge. Asn100, Asn105, Asn112, Asn217, Asn317, Asn341, Asn402, Asn418, and Asn460 each carry an N-linked (GlcNAc...) asparagine glycan. The FG-GAP 2 repeat unit spans residues 101 to 160; sequence TSIPNVTEVKENMTFGSTLVTNPNGGFLACGPLYAYRCGHLHYTTGICSDVSPTFQVVNS. Residues 161–360 enclose the VWFA domain; the sequence is IAPVQECSTQ…IVKTLGERIF (200 aa). The FG-GAP 3 repeat unit spans residues 365–417; it reads TADQSAASFEMEMSQTGFSAHYSQDWVMLGAVGAYDWNGTVVMQKASQIIIPR. 4 FG-GAP repeats span residues 422 to 475, 476 to 538, 557 to 615, and 619 to 679; these read NVES…DGNI, KILQ…RFEY, SCTT…TIRK, and QRIP…FEPN. Residues Asp498, Asp500, Asp502, and Asp506 each contribute to the Ca(2+) site. Asn532 is a glycosylation site (N-linked (GlcNAc...) asparagine). The Ca(2+) site is built by Asp580, Asn582, Asp584, Asp588, Asp642, Asn644, Asp646, and Asp650. A disulfide bond links Cys688 and Cys697. N-linked (GlcNAc...) asparagine glycans are attached at residues Asn699, Asn748, and Asn780. A disulfide bridge links Cys703 with Cys756. A disulfide bridge connects residues Cys808 and Cys814. Asn840, Asn883, Asn908, Asn915, Asn939, Asn966, Asn974, and Asn1008 each carry an N-linked (GlcNAc...) asparagine glycan. Cys878 and Cys886 are oxidised to a cystine. 2 disulfides stabilise this stretch: Cys1030/Cys1062 and Cys1065/Cys1072. Asn1073, Asn1083, Asn1102, and Asn1113 each carry an N-linked (GlcNAc...) asparagine glycan. The helical transmembrane segment at 1142–1164 threads the bilayer; it reads LWVILLSAFAGLLLLMLLILALW. Over 1165–1179 the chain is Cytoplasmic; the sequence is KIGFFKRPLKKKMEK. Positions 1167–1171 match the GFFKR motif motif; the sequence is GFFKR.

It belongs to the integrin alpha chain family. In terms of assembly, heterodimer of an alpha and a beta subunit. Alpha-1 associates with beta-1. Interacts with RAB21. Interacts (via cytoplasmic domain) with PTPN2; activates PTPN2 phosphatase activity towards EGFR and negatively regulates EGF signaling.

The protein localises to the membrane. Integrin alpha-1/beta-1 is a receptor for laminin and collagen. It recognizes the proline-hydroxylated sequence G-F-P-G-E-R in collagen. Involved in anchorage-dependent, negative regulation of EGF-stimulated cell growth. This is Integrin alpha-1 (ITGA1) from Homo sapiens (Human).